The sequence spans 379 residues: S-(hydroxymethyl)glutathione dehydrogenase (379 aa).

Residue cysteine 47 coordinates Zn(2+). Histidine 48 is a binding site for NAD(+). 7 residues coordinate Zn(2+): histidine 69, glutamate 70, cysteine 99, cysteine 102, cysteine 105, cysteine 113, and cysteine 176. NAD(+)-binding positions include 201–206 (GAGCIG), aspartate 225, and 296–298 (IGV).

Belongs to the zinc-containing alcohol dehydrogenase family. Class-III subfamily. Zn(2+) is required as a cofactor.

The enzyme catalyses a primary alcohol + NAD(+) = an aldehyde + NADH + H(+). The catalysed reaction is a secondary alcohol + NAD(+) = a ketone + NADH + H(+). It carries out the reaction S-(hydroxymethyl)glutathione + NADP(+) = S-formylglutathione + NADPH + H(+). It catalyses the reaction S-(hydroxymethyl)glutathione + NAD(+) = S-formylglutathione + NADH + H(+). The enzyme catalyses S-nitrosoglutathione + NADH + H(+) = S-(hydroxysulfenamide)glutathione + NAD(+). Its function is as follows. Oxidizes long-chain alcohols and, in the presence of glutathione, is able to oxidize formaldehyde. Also acts as a S-nitroso-glutathione reductase by catalyzing the NADH-dependent reduction of S-nitrosoglutathione, thereby regulating protein S-nitrosylation. The polypeptide is S-(hydroxymethyl)glutathione dehydrogenase (FLD1) (Komagataella pastoris (Yeast)).